The sequence spans 492 residues: Catalase isozyme 1 (492 aa).

Residues His65 and Asn138 contribute to the active site. Tyr348 lines the heme pocket.

Belongs to the catalase family. As to quaternary structure, homotetramer. Heme is required as a cofactor.

The protein resides in the peroxisome. It carries out the reaction 2 H2O2 = O2 + 2 H2O. Occurs in almost all aerobically respiring organisms and serves to protect cells from the toxic effects of hydrogen peroxide. The polypeptide is Catalase isozyme 1 (CAT1) (Solanum lycopersicum (Tomato)).